A 418-amino-acid polypeptide reads, in one-letter code: Dwarfin sma-2 (418 aa).

Positions 8–134 constitute an MH1 domain; that stretch reads KKITERLKWK…YKRVHATGVL (127 aa). Zn(2+) contacts are provided by Cys62, Cys107, Cys119, and His124. In terms of domain architecture, MH2 spans 222–418; sequence WATVSYYELN…PTPRPISSIS (197 aa).

It belongs to the dwarfin/SMAD family.

It is found in the cytoplasm. The protein resides in the nucleus. Functionally, involved in TGF-beta pathway. Plays a role in male tail tip morphogenesis. In Caenorhabditis elegans, this protein is Dwarfin sma-2.